The sequence spans 105 residues: Small ribosomal subunit protein uS10 (105 aa).

This sequence belongs to the universal ribosomal protein uS10 family. As to quaternary structure, part of the 30S ribosomal subunit.

Functionally, involved in the binding of tRNA to the ribosomes. The polypeptide is Small ribosomal subunit protein uS10 (Maridesulfovibrio salexigens (strain ATCC 14822 / DSM 2638 / NCIMB 8403 / VKM B-1763) (Desulfovibrio salexigens)).